The chain runs to 484 residues: Protein nucleotidyltransferase YdiU (484 aa).

Residues G87, G89, R90, K110, D122, G123, R173, and R180 each coordinate ATP. Catalysis depends on D249, which acts as the Proton acceptor. N250 and D259 together coordinate Mg(2+). D259 is an ATP binding site.

Belongs to the SELO family. Requires Mg(2+) as cofactor. Mn(2+) is required as a cofactor.

It carries out the reaction L-seryl-[protein] + ATP = 3-O-(5'-adenylyl)-L-seryl-[protein] + diphosphate. The catalysed reaction is L-threonyl-[protein] + ATP = 3-O-(5'-adenylyl)-L-threonyl-[protein] + diphosphate. The enzyme catalyses L-tyrosyl-[protein] + ATP = O-(5'-adenylyl)-L-tyrosyl-[protein] + diphosphate. It catalyses the reaction L-histidyl-[protein] + UTP = N(tele)-(5'-uridylyl)-L-histidyl-[protein] + diphosphate. It carries out the reaction L-seryl-[protein] + UTP = O-(5'-uridylyl)-L-seryl-[protein] + diphosphate. The catalysed reaction is L-tyrosyl-[protein] + UTP = O-(5'-uridylyl)-L-tyrosyl-[protein] + diphosphate. In terms of biological role, nucleotidyltransferase involved in the post-translational modification of proteins. It can catalyze the addition of adenosine monophosphate (AMP) or uridine monophosphate (UMP) to a protein, resulting in modifications known as AMPylation and UMPylation. The protein is Protein nucleotidyltransferase YdiU of Alcanivorax borkumensis (strain ATCC 700651 / DSM 11573 / NCIMB 13689 / SK2).